Here is a 289-residue protein sequence, read N- to C-terminus: Protein SET (289 aa).

The segment at 1 to 42 (MAPKRQSAILPQPKKPRPVAAPKLEDKSASPGLPKGEKEQQE) is disordered. Residue Ala-2 is modified to N,N,N-trimethylalanine. Ser-7 is subject to Phosphoserine. Pro-11 is subject to N6-acetyllysine. At Lys-15 the chain carries Phosphoserine. Residue Lys-23 is modified to N6-acetyllysine. Residues Leu-24, Ser-28, and Ser-62 each carry the phosphoserine modification. Residues 31–77 (PGLPKGEKEQQEAIEHIDEVQNEIDRLNEQASEEILKVEQKYNKLRQ) form a dimerization region. Lys-67 is subject to N6-acetyllysine. Residues 78-224 (PFFQKRSELI…ELGEVIKDDI (147 aa)) are earmuff domain. The residue at position 145 (Tyr-145) is a Phosphotyrosine. Lys-149 is modified (N6-acetyllysine). Residue Lys-153 forms a Glycyl lysine isopeptide (Lys-Gly) (interchain with G-Cter in ubiquitin) linkage. 2 disordered regions span residues 157-206 (LNES…TWFT) and 235-289 (PDMD…GEDD). The span at 168-180 (TEIKWKSGKDLTK) shows a compositional bias: basic and acidic residues. Lys-171 bears the N6-acetyllysine mark. Acidic residues predominate over residues 236-289 (DMDDEEGEAEDDDDDDEEEEGLEDIDEEGDEDEGEEDDDEDEGEEGEEDEGEDD).

It belongs to the nucleosome assembly protein (NAP) family. As to quaternary structure, headphone-shaped homodimer. Isoform 1 and isoform 2 interact directly with each other and with ANP32A within the tripartite INHAT (inhibitor of acetyltransferases) complex. Isoform 1 and isoform 2 interact also with histones. Isoform 2 is a omponent of the SET complex, composed of at least ANP32A, APEX1, HMGB2, NME1, SET and TREX1, but not NME2 or TREX2. Within this complex, directly interacts with ANP32A, NME1, HMGB2 and TREX1; the interaction with ANP32A is enhanced after cleavage. Interacts with APBB1, CHTOP, SETBP1, SGO1. Post-translationally, isoform 2 is phosphorylated on Ser-15 and Ser-24. In terms of processing, isoform 2 is acetylated on Lys-11. Some glutamate residues are glycylated by TTLL8. This modification occurs exclusively on glutamate residues and results in a glycine chain on the gamma-carboxyl group. Post-translationally, N-terminus of isoform 1 is methylated by METTL11A/NTM1. Mainly trimethylated. In terms of processing, cleaved after Lys-176 by GZMA. The cleavage inhibits its nucleosome assembly activity and disrupts the inhibition on NME1. In terms of tissue distribution, widely expressed, with higher expression in brain, thymus, spleen and bone marrow, and lower expression in heart, liver and muscle.

Its subcellular location is the cytoplasm. The protein localises to the cytosol. The protein resides in the endoplasmic reticulum. It localises to the nucleus. It is found in the nucleoplasm. Functionally, multitasking protein, involved in apoptosis, transcription, nucleosome assembly and histone chaperoning. Isoform 2 anti-apoptotic activity is mediated by inhibition of the GZMA-activated DNase, NME1. In the course of cytotoxic T-lymphocyte (CTL)-induced apoptosis, GZMA cleaves SET, disrupting its binding to NME1 and releasing NME1 inhibition. Isoform 1 and isoform 2 are potent inhibitors of protein phosphatase 2A. Isoform 1 and isoform 2 inhibit EP300/CREBBP and PCAF-mediated acetylation of histones (HAT) and nucleosomes, most probably by masking the accessibility of lysines of histones to the acetylases. The predominant target for inhibition is histone H4. HAT inhibition leads to silencing of HAT-dependent transcription and prevents active demethylation of DNA. Both isoforms stimulate DNA replication of the adenovirus genome complexed with viral core proteins; however, isoform 2 specific activity is higher. The polypeptide is Protein SET (Set) (Rattus norvegicus (Rat)).